The sequence spans 515 residues: Histidine ammonia-lyase (515 aa).

Residues 146-148 constitute a cross-link (5-imidazolinone (Ala-Gly)); sequence ASG. Ser-147 bears the 2,3-didehydroalanine (Ser) mark.

The protein belongs to the PAL/histidase family. Contains an active site 4-methylidene-imidazol-5-one (MIO), which is formed autocatalytically by cyclization and dehydration of residues Ala-Ser-Gly.

Its subcellular location is the cytoplasm. The enzyme catalyses L-histidine = trans-urocanate + NH4(+). Its pathway is amino-acid degradation; L-histidine degradation into L-glutamate; N-formimidoyl-L-glutamate from L-histidine: step 1/3. This is Histidine ammonia-lyase (hutH) from Ralstonia nicotianae (strain ATCC BAA-1114 / GMI1000) (Ralstonia solanacearum).